The chain runs to 503 residues: Probable cytosol aminopeptidase (503 aa).

Mn(2+) contacts are provided by Lys270 and Asp275. The active site involves Lys282. Residues Asp293, Asp352, and Glu354 each coordinate Mn(2+). Arg356 is an active-site residue.

The protein belongs to the peptidase M17 family. Mn(2+) is required as a cofactor.

It is found in the cytoplasm. It catalyses the reaction Release of an N-terminal amino acid, Xaa-|-Yaa-, in which Xaa is preferably Leu, but may be other amino acids including Pro although not Arg or Lys, and Yaa may be Pro. Amino acid amides and methyl esters are also readily hydrolyzed, but rates on arylamides are exceedingly low.. The catalysed reaction is Release of an N-terminal amino acid, preferentially leucine, but not glutamic or aspartic acids.. In terms of biological role, presumably involved in the processing and regular turnover of intracellular proteins. Catalyzes the removal of unsubstituted N-terminal amino acids from various peptides. The chain is Probable cytosol aminopeptidase from Pectobacterium atrosepticum (strain SCRI 1043 / ATCC BAA-672) (Erwinia carotovora subsp. atroseptica).